Reading from the N-terminus, the 697-residue chain is Potassium-transporting ATPase ATP-binding subunit (697 aa).

4 helical membrane-spanning segments follow: residues 55–75 (PIMF…FLPS), 79–99 (SIPG…VLFA), 245–265 (LTLI…YLGF), and 271–291 (VLVA…LSAI). Catalysis depends on Asp324, which acts as the 4-aspartylphosphate intermediate. ATP-binding positions include Asp361, Glu365, 393-400 (FKAETRMS), and Lys412. Residues Asp535 and Asp539 each contribute to the Mg(2+) site. 3 helical membrane-spanning segments follow: residues 605–625 (FAII…LNIM), 633–653 (AILS…PLAM), and 677–697 (GGVI…GLFI).

Belongs to the cation transport ATPase (P-type) (TC 3.A.3) family. Type IA subfamily. The system is composed of three essential subunits: KdpA, KdpB and KdpC.

It localises to the cell membrane. It catalyses the reaction K(+)(out) + ATP + H2O = K(+)(in) + ADP + phosphate + H(+). In terms of biological role, part of the high-affinity ATP-driven potassium transport (or Kdp) system, which catalyzes the hydrolysis of ATP coupled with the electrogenic transport of potassium into the cytoplasm. This subunit is responsible for energy coupling to the transport system and for the release of the potassium ions to the cytoplasm. The chain is Potassium-transporting ATPase ATP-binding subunit from Bacillus cereus (strain B4264).